We begin with the raw amino-acid sequence, 392 residues long: Pyoverdine export membrane fusion protein PvdR (392 aa).

Residues 1–36 (MRRSTHTRRRLLLGGLGLLGLGSLLAWTSLPFGAQP) constitute a signal peptide (tat-type signal). Residues 109–181 (IDNLKAQLAE…NASLRSDEAE (73 aa)) adopt a coiled-coil conformation. The interval 267 to 286 (PPKPLDQTSQGGGSPASATA) is disordered.

Belongs to the membrane fusion protein (MFP) (TC 8.A.1) family. As to quaternary structure, part of the tripartite efflux system PvdRT-OpmQ, which is composed of an inner membrane component with both ATPase and permease domains, PvdT, a periplasmic membrane fusion protein, PvdR, and an outer membrane component, OpmQ. Predicted to be exported by the Tat system. The position of the signal peptide cleavage has not been experimentally proven.

It is found in the periplasm. Functionally, part of the tripartite efflux system PvdRT-OpmQ required for the secretion into the extracellular milieu of the siderophore pyoverdine (PVD), which is involved in iron acquisition. This subunit is an adapter protein that stimulates the ATPase activity of PvdT and connects the inner and outer membrane components. The system is responsible for export of newly synthesized PVD after the final steps of biosynthesis have taken place in the periplasm. It is also responsible for recycling of PVD after internalization of ferri-PVD into the periplasm by the outer-membrane receptor FpvA and release of iron from PVD, thus making PVD available for new cycles of iron uptake. Contributes to resistance against ampicillin. This Pseudomonas putida (strain ATCC 47054 / DSM 6125 / CFBP 8728 / NCIMB 11950 / KT2440) protein is Pyoverdine export membrane fusion protein PvdR.